We begin with the raw amino-acid sequence, 308 residues long: Putative S-adenosyl-L-methionine-dependent methyltransferase Mmcs_1045 (308 aa).

Residues Asp-133 and 162 to 163 contribute to the S-adenosyl-L-methionine site; that span reads DL.

This sequence belongs to the UPF0677 family.

In terms of biological role, exhibits S-adenosyl-L-methionine-dependent methyltransferase activity. The protein is Putative S-adenosyl-L-methionine-dependent methyltransferase Mmcs_1045 of Mycobacterium sp. (strain MCS).